Consider the following 458-residue polypeptide: Alpha-2C adrenergic receptor (458 aa).

Over 1-51 the chain is Extracellular; sequence MASPALAAALAAAAAEGPNGSDAGEWGSGGGANASGTDWGPPPGQYSAGAV. N-linked (GlcNAc...) asparagine glycosylation is found at Asn-19 and Asn-33. The chain crosses the membrane as a helical span at residues 52–76; the sequence is AGLAAVVGFLIVFTVVGNVLVVIAV. Residues 77–88 lie on the Cytoplasmic side of the membrane; sequence LTSRALRAPQNL. Residues 89–114 form a helical membrane-spanning segment; the sequence is FLVSLASADILVATLVMPFSLANELM. Over 115 to 124 the chain is Extracellular; the sequence is AYWYFGQVWC. A disulfide bridge links Cys-124 with Cys-202. Residues 125–147 traverse the membrane as a helical segment; sequence GVYLALDVLFCTSSIVHLCAISL. Residues 148-168 lie on the Cytoplasmic side of the membrane; the sequence is DRYWSVTQAVEYNLKRTPRRV. The helical transmembrane segment at 169-191 threads the bilayer; it reads KATIVAVWLISAVISFPPLVSFY. The Extracellular segment spans residues 192–207; it reads RRPDGAAYPQCGLNDE. Residues 208 to 231 traverse the membrane as a helical segment; sequence TWYILSSCIGSFFAPCLIMGLVYA. Topologically, residues 232-379 are cytoplasmic; the sequence is RIYRVAKLRT…QAREKRFTFV (148 aa). The disordered stretch occupies residues 245–343; the sequence is SEKRGPAGPD…SPGPGGRLSR (99 aa). Residues 291–303 show a composition bias toward basic residues; that stretch reads RRRRRGALRRGGR. A helical transmembrane segment spans residues 380 to 403; sequence LAVVMGVFVLCWFPFFFSYSLYGI. Residues 404–416 lie on the Extracellular side of the membrane; the sequence is CREACQLPEPLFK. The helical transmembrane segment at 417–437 threads the bilayer; that stretch reads FFFWIGYCNSSLNPVIYTVFN. At 438–458 the chain is on the cytoplasmic side; that stretch reads QDFRRSFKHILFRRRRRGFRQ.

Belongs to the G-protein coupled receptor 1 family. Adrenergic receptor subfamily. ADRA2C sub-subfamily.

The protein resides in the cell membrane. Its function is as follows. Alpha-2 adrenergic receptors mediate the catecholamine-induced inhibition of adenylate cyclase through the action of G proteins. This is Alpha-2C adrenergic receptor (Adra2c) from Rattus norvegicus (Rat).